The chain runs to 151 residues: Large ribosomal subunit protein uL13 (151 aa).

It belongs to the universal ribosomal protein uL13 family. As to quaternary structure, part of the 50S ribosomal subunit.

This protein is one of the early assembly proteins of the 50S ribosomal subunit, although it is not seen to bind rRNA by itself. It is important during the early stages of 50S assembly. The polypeptide is Large ribosomal subunit protein uL13 (Rippkaea orientalis (strain PCC 8801 / RF-1) (Cyanothece sp. (strain PCC 8801))).